Reading from the N-terminus, the 128-residue chain is uncharacterized protein (128 aa).

Residues 8-28 (YQAIYLIFAGFTVFGLLLHFY) form a helical membrane-spanning segment.

The protein localises to the membrane. This is an uncharacterized protein from Haemophilus influenzae (strain ATCC 51907 / DSM 11121 / KW20 / Rd).